A 68-amino-acid chain; its full sequence is Large ribosomal subunit protein uL29 (68 aa).

The protein belongs to the universal ribosomal protein uL29 family.

The polypeptide is Large ribosomal subunit protein uL29 (Prochlorococcus marinus (strain SARG / CCMP1375 / SS120)).